A 561-amino-acid chain; its full sequence is Arginine--tRNA ligase (561 aa).

Residues 123 to 133 (PNIAKDMHVGH) carry the 'HIGH' region motif.

It belongs to the class-I aminoacyl-tRNA synthetase family. Monomer.

It is found in the cytoplasm. It catalyses the reaction tRNA(Arg) + L-arginine + ATP = L-arginyl-tRNA(Arg) + AMP + diphosphate. This Chlamydia pneumoniae (Chlamydophila pneumoniae) protein is Arginine--tRNA ligase (argS).